The following is a 371-amino-acid chain: F-box protein At2g41170 (371 aa).

The F-box domain occupies 56 to 102 (KMSLLDLPDLTLDCILEKLSPSELCAMTSVCSELRDKCVSDHLWEKH).

This is F-box protein At2g41170 from Arabidopsis thaliana (Mouse-ear cress).